The primary structure comprises 133 residues: uncharacterized protein (133 aa).

The tract at residues 107–133 (TSHHRAAGLQSQHAPGSGRVRITGGKV) is disordered.

This is an uncharacterized protein from Homo sapiens (Human).